The chain runs to 275 residues: Large ribosomal subunit protein uL2 (275 aa).

Residues 222–275 (GKVMNPVDHPHGGGEGRNPIGRNPSTPWGKLAMGVKTRGNKKSDRLIVKRRNKK) form a disordered region.

The protein belongs to the universal ribosomal protein uL2 family. In terms of assembly, part of the 50S ribosomal subunit. Forms a bridge to the 30S subunit in the 70S ribosome.

Functionally, one of the primary rRNA binding proteins. Required for association of the 30S and 50S subunits to form the 70S ribosome, for tRNA binding and peptide bond formation. It has been suggested to have peptidyltransferase activity; this is somewhat controversial. Makes several contacts with the 16S rRNA in the 70S ribosome. The protein is Large ribosomal subunit protein uL2 of Desulforamulus reducens (strain ATCC BAA-1160 / DSM 100696 / MI-1) (Desulfotomaculum reducens).